The sequence spans 361 residues: Chorismate synthase (361 aa).

2 residues coordinate NADP(+): arginine 48 and arginine 54. FMN-binding positions include 125–127 (RSS), 238–239 (NA), glycine 278, 293–297 (KPTSS), and arginine 319.

Belongs to the chorismate synthase family. As to quaternary structure, homotetramer. FMNH2 is required as a cofactor.

It carries out the reaction 5-O-(1-carboxyvinyl)-3-phosphoshikimate = chorismate + phosphate. Its pathway is metabolic intermediate biosynthesis; chorismate biosynthesis; chorismate from D-erythrose 4-phosphate and phosphoenolpyruvate: step 7/7. Functionally, catalyzes the anti-1,4-elimination of the C-3 phosphate and the C-6 proR hydrogen from 5-enolpyruvylshikimate-3-phosphate (EPSP) to yield chorismate, which is the branch point compound that serves as the starting substrate for the three terminal pathways of aromatic amino acid biosynthesis. This reaction introduces a second double bond into the aromatic ring system. The sequence is that of Chorismate synthase from Shigella boydii serotype 18 (strain CDC 3083-94 / BS512).